The primary structure comprises 775 residues: Aconitate hydratase, mitochondrial (775 aa).

The N-terminal 25 residues, 1 to 25 (MLTTLARASAMLLGARGFASAADLD), are a transit peptide targeting the mitochondrion. Residues Q95 and 188–190 (DSH) each bind substrate. N-linked (GlcNAc...) asparagine glycosylation is present at N337. [4Fe-4S] cluster is bound at residue C381. The N-linked (GlcNAc...) asparagine glycan is linked to N383. The [4Fe-4S] cluster site is built by C444 and C447. R470 lines the substrate pocket. N471 carries an N-linked (GlcNAc...) asparagine glycan. Substrate is bound by residues R475 and R603. N-linked (GlcNAc...) asparagine glycosylation is present at N608. 666-667 (SR) is a binding site for substrate. N754 and N763 each carry an N-linked (GlcNAc...) asparagine glycan.

The protein belongs to the aconitase/IPM isomerase family. In terms of assembly, monomer. [4Fe-4S] cluster serves as cofactor.

Its subcellular location is the mitochondrion. The catalysed reaction is citrate = D-threo-isocitrate. Its pathway is carbohydrate metabolism; tricarboxylic acid cycle; isocitrate from oxaloacetate: step 2/2. In terms of biological role, catalyzes the isomerization of citrate to isocitrate via cis-aconitate. The polypeptide is Aconitate hydratase, mitochondrial (Arthroderma benhamiae (strain ATCC MYA-4681 / CBS 112371) (Trichophyton mentagrophytes)).